The chain runs to 320 residues: Transaldolase (320 aa).

Lys-126 acts as the Schiff-base intermediate with substrate in catalysis.

This sequence belongs to the transaldolase family. Type 1 subfamily. In terms of assembly, homodimer.

It localises to the cytoplasm. It catalyses the reaction D-sedoheptulose 7-phosphate + D-glyceraldehyde 3-phosphate = D-erythrose 4-phosphate + beta-D-fructose 6-phosphate. Its pathway is carbohydrate degradation; pentose phosphate pathway; D-glyceraldehyde 3-phosphate and beta-D-fructose 6-phosphate from D-ribose 5-phosphate and D-xylulose 5-phosphate (non-oxidative stage): step 2/3. Its function is as follows. Transaldolase is important for the balance of metabolites in the pentose-phosphate pathway. This is Transaldolase from Bordetella pertussis (strain Tohama I / ATCC BAA-589 / NCTC 13251).